A 156-amino-acid chain; its full sequence is Small ribosomal subunit protein uS7 (156 aa).

It belongs to the universal ribosomal protein uS7 family. In terms of assembly, part of the 30S ribosomal subunit. Contacts proteins S9 and S11.

Functionally, one of the primary rRNA binding proteins, it binds directly to 16S rRNA where it nucleates assembly of the head domain of the 30S subunit. Is located at the subunit interface close to the decoding center, probably blocks exit of the E-site tRNA. This is Small ribosomal subunit protein uS7 from Nitrobacter hamburgensis (strain DSM 10229 / NCIMB 13809 / X14).